An 865-amino-acid polypeptide reads, in one-letter code: Leucine--tRNA ligase (865 aa).

A 'HIGH' region motif is present at residues 36 to 46; that stretch reads PYPSGKIHMGH. Positions 608 to 612 match the 'KMSKS' region motif; the sequence is KMSKS. Residue lysine 611 participates in ATP binding.

This sequence belongs to the class-I aminoacyl-tRNA synthetase family.

Its subcellular location is the cytoplasm. The catalysed reaction is tRNA(Leu) + L-leucine + ATP = L-leucyl-tRNA(Leu) + AMP + diphosphate. The protein is Leucine--tRNA ligase of Wolbachia sp. subsp. Brugia malayi (strain TRS).